The chain runs to 115 residues: DNA repair protein homolog YozK (115 aa).

The UmuC domain maps to 12–115 (ILCVDMKSFY…EKCVHTYSID (104 aa)). Asp-16 and Asp-115 together coordinate Mg(2+).

It belongs to the DNA polymerase type-Y family. Mg(2+) serves as cofactor.

The chain is DNA repair protein homolog YozK (yozK) from Bacillus subtilis (strain 168).